Reading from the N-terminus, the 219-residue chain is Histone H1.4 (219 aa).

Positions 1-15 (MSETAPAAPAAPAPA) are enriched in low complexity. The segment at 1–41 (MSETAPAAPAAPAPAEKTPVKKKARKAAGGAKRKTSGPPVS) is disordered. Serine 2 bears the N-acetylserine mark. Serine 2 carries the post-translational modification Phosphoserine. Position 17 is an N6-acetyllysine (lysine 17). Phosphothreonine is present on threonine 18. Basic residues predominate over residues 20 to 35 (VKKKARKAAGGAKRKT). Lysine 26 is subject to N6-acetyllysine; alternate. At lysine 26 the chain carries N6-methyllysine; alternate. Lysine 34 is subject to N6-(beta-hydroxybutyryl)lysine; alternate. The residue at position 34 (lysine 34) is an N6-succinyllysine; alternate. Residue serine 36 is modified to Phosphoserine. The H15 domain maps to 36 to 109 (SGPPVSELIT…GASGSFKLNK (74 aa)). Lysine 52 carries the post-translational modification N6-(beta-hydroxybutyryl)lysine. Arginine 54 is modified (citrulline). An N6-(beta-hydroxybutyryl)lysine mark is found at lysine 64, lysine 85, lysine 90, and lysine 106. Residues 92–219 (TLVQTKGTGA…KPKKTAAKKK (128 aa)) are disordered. The span at 119 to 140 (KAKRAGAAKAKKPAGAAKKPKK) shows a compositional bias: basic residues. Threonine 146 is subject to Phosphothreonine. Basic residues-rich tracts occupy residues 149–160 (KSTKKTPKKAKK) and 168–185 (KKAK…KKAP). Serine 150 is subject to ADP-ribosylserine. The residue at position 187 (serine 187) is a Phosphoserine. The segment covering 192-219 (KTVKPKAAKPKTSKPKAAKPKKTAAKKK) has biased composition (basic residues).

This sequence belongs to the histone H1/H5 family. Citrullination at Arg-54 (H1R54ci) by PADI4 takes place within the DNA-binding site of H1 and results in its displacement from chromatin and global chromatin decondensation, thereby promoting pluripotency and stem cell maintenance. In terms of processing, ADP-ribosylated on Ser-55, Ser-113 and Ser-150 in response to DNA damage. Post-translationally, H1 histones are progressively phosphorylated during the cell cycle, becoming maximally phosphorylated during late G2 phase and M phase, and being dephosphorylated sharply thereafter. Acetylated at Lys-26. Deacetylated at Lys-26 by SIRT1. In terms of processing, hydroxybutyrylation of histones is induced by starvation.

Its subcellular location is the nucleus. It localises to the chromosome. In terms of biological role, histone H1 protein binds to linker DNA between nucleosomes forming the macromolecular structure known as the chromatin fiber. Histones H1 are necessary for the condensation of nucleosome chains into higher-order structured fibers. Also acts as a regulator of individual gene transcription through chromatin remodeling, nucleosome spacing and DNA methylation. The polypeptide is Histone H1.4 (Mus musculus (Mouse)).